The chain runs to 411 residues: Adherens junction-associated protein 1 (411 aa).

The signal sequence occupies residues 1–43; sequence MWIQQLLGLSSMSIRWPGRPLGSHAWILIAMFQLAVDLPACEA. Residues 44-282 lie on the Extracellular side of the membrane; it reads LGPGPEFWLL…GEASGLAVHQ (239 aa). Disordered stretches follow at residues 89–108, 115–197, and 239–268; these read IHGQ…RDQA, AGLA…SNTF, and SLDP…VTQP. The segment covering 115-146 has biased composition (low complexity); the sequence is AGLAKPPAAAKSSPSLASSSSSSSSAVAGGAP. The span at 166–178 shows a compositional bias: polar residues; sequence SFDSRGSRPTTET. The span at 247–263 shows a compositional bias: low complexity; it reads PGGVSTTEPSTSPSNNG. A helical transmembrane segment spans residues 283 to 303; the sequence is IITITVSLIMVIAALITTLVL. The targeting signals stretch occupies residues 303–411; the sequence is LKNCCAQSGN…VSEKWFEISC (109 aa). Residues 304 to 411 lie on the Cytoplasmic side of the membrane; it reads KNCCAQSGNT…VSEKWFEISC (108 aa). The interval 311-330 is disordered; it reads GNTRRNSHQRKTNQQEESCQ.

Forms a complex with CDH1 and CTNNB1; interacts directly with CTNNB1. Interacts with AP1M2. Interacts with isoform 2 of BSG/CD147. Post-translationally, thr-237 and Ser-239 may be phosphorylated; however as this position is probably extracellular, the in vivo relevance is not proven. Expressed in uterus and pancreas (at protein level).

Its subcellular location is the basolateral cell membrane. It localises to the apical cell membrane. The protein resides in the cell junction. The protein localises to the adherens junction. Its function is as follows. Plays a role in cell adhesion and cell migration. The protein is Adherens junction-associated protein 1 (AJAP1) of Homo sapiens (Human).